We begin with the raw amino-acid sequence, 148 residues long: MNNKFKDFFGFGDNDSYEERDAYEEHYDEQEEMQNSNRPTNSRDSNVVSIKAGQAGSGPSKIVLYEPRVYSDAKEVAQNLLNQRAIIINFSRMDDASARRVVDFITGTVYALNGEIQRIGDKIFLATPPKFETDGKITELLDKKDTLG.

The interval 1 to 59 is disordered; that stretch reads MNNKFKDFFGFGDNDSYEERDAYEEHYDEQEEMQNSNRPTNSRDSNVVSIKAGQAGSGP. Polar residues predominate over residues 33 to 48; sequence MQNSNRPTNSRDSNVV.

Belongs to the SepF family. Homodimer. Interacts with FtsZ.

The protein localises to the cytoplasm. Cell division protein that is part of the divisome complex and is recruited early to the Z-ring. Probably stimulates Z-ring formation, perhaps through the cross-linking of FtsZ protofilaments. Its function overlaps with FtsA. In Lactobacillus delbrueckii subsp. bulgaricus (strain ATCC BAA-365 / Lb-18), this protein is Cell division protein SepF.